Here is a 503-residue protein sequence, read N- to C-terminus: MAADQGIFTNSVTLSPVEGSRTGGTLPRRAFRRSCDRCHAQKIKCTGNKEVTGRAPCQRCQQAGLRCVYSERCPKRKLRQSRAADLVSADPDPCLHMSSPPVPSQSLPLDVSESHSSNTSRQFLDPPDSYDWSWTSIGTDEAIDTDCWGLSQCDGGFSCQLEPTLPDLPSPFESTVEKAPLPPVSSDIARAASAQRELFDDLSAVSQELEEILLAVTVEWPKQEIWTRASPHSPTASRERIAQRRQNVWANWLTDLHMFSLDPIGMFFNASRRLLTVLRQQAQADCHQGTLDECLRTKNLFTAVHCYILNVRILTAISELLLSQIRRTQNSHMSPLEGSRSQSPSRDDTSSSSGHSSVDTIPFFSENLPIGELFSYVDPLTHALFSACTTLHVGVQLLRENEITLGVHSAQGIAASISMSGEPGEDIARTGATNSARCEEQPTTPAARVLFMFLSDEGAFQEAKSAGSRGRTIAALRRCYEDIFSLARKHKHGMLRDLNNIPP.

The zn(2)-C6 fungal-type DNA-binding region spans 35–67 (CDRCHAQKIKCTGNKEVTGRAPCQRCQQAGLRC). Disordered stretches follow at residues 89–124 (ADPD…RQFL) and 331–358 (SHMS…HSSV). Residues 339–357 (SRSQSPSRDDTSSSSGHSS) show a composition bias toward low complexity.

Its subcellular location is the nucleus. Transcription factor that regulates the expression of the he gene cluster that mediates the biosynthesis of lovastatin (also known as mevinolin, mevacor or monacolin K), a hypolipidemic inhibitor of (3S)-hydroxymethylglutaryl-coenzyme A (HMG-CoA) reductase (HMGR). The sequence is that of Transcriptional regulator LovE from Aspergillus terreus.